Here is a 242-residue protein sequence, read N- to C-terminus: Ubiquinone biosynthesis O-methyltransferase (242 aa).

S-adenosyl-L-methionine contacts are provided by Arg36, Gly56, Asp77, and Met130.

The protein belongs to the methyltransferase superfamily. UbiG/COQ3 family.

It carries out the reaction a 3-demethylubiquinol + S-adenosyl-L-methionine = a ubiquinol + S-adenosyl-L-homocysteine + H(+). The catalysed reaction is a 3-(all-trans-polyprenyl)benzene-1,2-diol + S-adenosyl-L-methionine = a 2-methoxy-6-(all-trans-polyprenyl)phenol + S-adenosyl-L-homocysteine + H(+). It participates in cofactor biosynthesis; ubiquinone biosynthesis. O-methyltransferase that catalyzes the 2 O-methylation steps in the ubiquinone biosynthetic pathway. The chain is Ubiquinone biosynthesis O-methyltransferase from Pasteurella multocida (strain Pm70).